A 1209-amino-acid polypeptide reads, in one-letter code: DNA-directed RNA polymerase subunit beta (1209 aa).

Residues 1173 to 1192 show a composition bias toward basic and acidic residues; that stretch reads QQEKKKLAEEAAKKDDKPDE. The tract at residues 1173–1209 is disordered; that stretch reads QQEKKKLAEEAAKKDDKPDEPVDESDSSTSSDDKVSK.

It belongs to the RNA polymerase beta chain family. The RNAP catalytic core consists of 2 alpha, 1 beta, 1 beta' and 1 omega subunit. When a sigma factor is associated with the core the holoenzyme is formed, which can initiate transcription.

The catalysed reaction is RNA(n) + a ribonucleoside 5'-triphosphate = RNA(n+1) + diphosphate. DNA-dependent RNA polymerase catalyzes the transcription of DNA into RNA using the four ribonucleoside triphosphates as substrates. The chain is DNA-directed RNA polymerase subunit beta from Lactobacillus johnsonii (strain CNCM I-12250 / La1 / NCC 533).